Reading from the N-terminus, the 431-residue chain is Serine hydroxymethyltransferase (431 aa).

(6S)-5,6,7,8-tetrahydrofolate is bound by residues leucine 121 and 125 to 127 (GHL). Residue lysine 230 is modified to N6-(pyridoxal phosphate)lysine. 369 to 371 (SPF) lines the (6S)-5,6,7,8-tetrahydrofolate pocket.

It belongs to the SHMT family. Homodimer. The cofactor is pyridoxal 5'-phosphate.

It is found in the cytoplasm. It carries out the reaction (6R)-5,10-methylene-5,6,7,8-tetrahydrofolate + glycine + H2O = (6S)-5,6,7,8-tetrahydrofolate + L-serine. It functions in the pathway one-carbon metabolism; tetrahydrofolate interconversion. It participates in amino-acid biosynthesis; glycine biosynthesis; glycine from L-serine: step 1/1. Its function is as follows. Catalyzes the reversible interconversion of serine and glycine with tetrahydrofolate (THF) serving as the one-carbon carrier. This reaction serves as the major source of one-carbon groups required for the biosynthesis of purines, thymidylate, methionine, and other important biomolecules. Also exhibits THF-independent aldolase activity toward beta-hydroxyamino acids, producing glycine and aldehydes, via a retro-aldol mechanism. The protein is Serine hydroxymethyltransferase of Cytophaga hutchinsonii (strain ATCC 33406 / DSM 1761 / CIP 103989 / NBRC 15051 / NCIMB 9469 / D465).